The chain runs to 1536 residues: Ferredoxin-dependent glutamate synthase (1536 aa).

Cys-27 acts as the For GATase activity in catalysis. A Glutamine amidotransferase type-2 domain is found at 27–427; it reads CGVGFIANLN…PGQMLCVDLS (401 aa). Residue 1105 to 1162 participates in FMN binding; the sequence is LAEVHTTLVENSLREKVILRVDGGLRTGKDIIIAALMGAEEFGFGTVAMIATGCVMAR. [3Fe-4S] cluster is bound by residues Cys-1158, Cys-1164, and Cys-1169.

It belongs to the glutamate synthase family. Monomer. The cofactor is [3Fe-4S] cluster. FAD serves as cofactor. FMN is required as a cofactor.

The protein localises to the plastid. Its subcellular location is the chloroplast stroma. It catalyses the reaction 2 oxidized [2Fe-2S]-[ferredoxin] + 2 L-glutamate = L-glutamine + 2 reduced [2Fe-2S]-[ferredoxin] + 2-oxoglutarate + 2 H(+). It functions in the pathway amino-acid biosynthesis; L-glutamate biosynthesis via GLT pathway; L-glutamate from 2-oxoglutarate and L-glutamine (ferredoxin route): step 1/1. Its pathway is energy metabolism; nitrogen metabolism. This chain is Ferredoxin-dependent glutamate synthase (gltB), found in Antithamnion sp. (Red alga).